Here is a 690-residue protein sequence, read N- to C-terminus: Protein arginine N-methyltransferase 7 (690 aa).

SAM-dependent MTase PRMT-type domains lie at 14-357 and 366-690; these read QNSW…YSLW and TKSV…QKKL.

Belongs to the class I-like SAM-binding methyltransferase superfamily. Protein arginine N-methyltransferase family. PRMT7 subfamily.

Functionally, essential arginine methyltransferase that can both catalyze the formation of omega-N monomethylarginine (MMA) and symmetrical dimethylarginine (sDMA). Specifically mediates the symmetrical dimethylation of arginine residues in the small nuclear ribonucleoproteins SmD1 and SmD3. The chain is Protein arginine N-methyltransferase 7 (Art7) from Drosophila sechellia (Fruit fly).